A 258-amino-acid polypeptide reads, in one-letter code: Transcriptional repressor AccR (258 aa).

The 56-residue stretch at 6–61 (TQDRQAKIVELLRDEQFLAIGRLTEHFQISVATARRDLSELHEAGLLRRTHGGAVS) folds into the HTH deoR-type domain. Residues 23 to 42 (LAIGRLTEHFQISVATARRD) constitute a DNA-binding region (H-T-H motif).

Functionally, represses opine catabolism and conjugal transfer of the nopaline Ti plasmid pTiC58. In Agrobacterium fabrum (strain C58 / ATCC 33970) (Agrobacterium tumefaciens (strain C58)), this protein is Transcriptional repressor AccR (accR).